The following is a 389-amino-acid chain: 8-amino-7-oxononanoate synthase (389 aa).

A substrate-binding site is contributed by Arg-18. Residue 104 to 105 (GY) participates in pyridoxal 5'-phosphate binding. His-129 provides a ligand contact to substrate. The pyridoxal 5'-phosphate site is built by Ser-176, His-204, and Thr-232. At Lys-235 the chain carries N6-(pyridoxal phosphate)lysine. Residue Thr-351 participates in substrate binding.

It belongs to the class-II pyridoxal-phosphate-dependent aminotransferase family. BioF subfamily. Homodimer. Pyridoxal 5'-phosphate serves as cofactor.

It carries out the reaction 6-carboxyhexanoyl-[ACP] + L-alanine + H(+) = (8S)-8-amino-7-oxononanoate + holo-[ACP] + CO2. It participates in cofactor biosynthesis; biotin biosynthesis. Catalyzes the decarboxylative condensation of pimeloyl-[acyl-carrier protein] and L-alanine to produce 8-amino-7-oxononanoate (AON), [acyl-carrier protein], and carbon dioxide. The sequence is that of 8-amino-7-oxononanoate synthase from Citrifermentans bemidjiense (strain ATCC BAA-1014 / DSM 16622 / JCM 12645 / Bem) (Geobacter bemidjiensis).